The chain runs to 355 residues: 3-isopropylmalate dehydrogenase (355 aa).

Substrate contacts are provided by arginine 90, arginine 100, arginine 128, and aspartate 222. Residues aspartate 222, aspartate 246, and aspartate 250 each contribute to the Mg(2+) site. NAD(+) is bound at residue glycine 280–asparagine 292.

Belongs to the isocitrate and isopropylmalate dehydrogenases family. LeuB type 1 subfamily. In terms of assembly, homodimer. Mg(2+) is required as a cofactor. It depends on Mn(2+) as a cofactor.

Its subcellular location is the cytoplasm. The enzyme catalyses (2R,3S)-3-isopropylmalate + NAD(+) = 4-methyl-2-oxopentanoate + CO2 + NADH. It functions in the pathway amino-acid biosynthesis; L-leucine biosynthesis; L-leucine from 3-methyl-2-oxobutanoate: step 3/4. Catalyzes the oxidation of 3-carboxy-2-hydroxy-4-methylpentanoate (3-isopropylmalate) to 3-carboxy-4-methyl-2-oxopentanoate. The product decarboxylates to 4-methyl-2 oxopentanoate. The chain is 3-isopropylmalate dehydrogenase from Cupriavidus pinatubonensis (strain JMP 134 / LMG 1197) (Cupriavidus necator (strain JMP 134)).